A 1588-amino-acid chain; its full sequence is Autotransporter adhesin EhaG (1588 aa).

The first 53 residues, 1–53, serve as a signal peptide directing secretion; the sequence is MNKIFKVIWNPATGNYTVTSETAKSRGKKSGRSKLLISALVAGGMLSSFGALA. Residues 54-1499 form a surface exposed passenger domain region; sequence NAGNDNGQGV…QETKQYTDQR (1446 aa). Residues 1500–1588 are translocator domain; sequence MVEMDNKLSK…SAALGAGIQW (89 aa). A run of 4 beta stranded transmembrane segments spans residues 1534 to 1544, 1548 to 1558, 1567 to 1573, and 1577 to 1588; these read GASMASIGGGT, ESAVALGVSMV, KLQGSTN, and EYSAALGAGIQW.

It belongs to the autotransporter-2 (AT-2) (TC 1.B.40) family. Homotrimer.

The protein resides in the cell surface. It is found in the cell outer membrane. Mediates aggregation, biofilm formation and adhesion to a range of extracellular matrix (ECM) proteins, such as fibronectin, fibrinogen, laminin and collagen types I, II, III, and V. Mediates adhesion to intestinal epithelial cells. In Escherichia coli O157:H7, this protein is Autotransporter adhesin EhaG.